A 213-amino-acid polypeptide reads, in one-letter code: MGREFIPLFEDWAATYDATVHGADKQYAAVFKGYDNILDSIVALSGSNVLEFGPGTGNLTAKLAAANKKVFGVEPSPSMRKLAADKLSDKAVFSDGDFLEFPAPPFQIDTIVSSYAFHHLTDEEKRTAVKQYGAILQKHDKIVFADTVFKDHEAYDEAIKKAIRNGYHQLADDLKTEHYPTLGTMKNIFSEEGFAARFTQQNDFVWIMEAIKR.

S-adenosyl-L-methionine-binding residues include Gly53, Glu74, and Asp97.

Belongs to the methyltransferase superfamily. YrrT family.

Functionally, could be a S-adenosyl-L-methionine-dependent methyltransferase. This is an uncharacterized protein from Bacillus velezensis (strain DSM 23117 / BGSC 10A6 / LMG 26770 / FZB42) (Bacillus amyloliquefaciens subsp. plantarum).